The following is a 166-amino-acid chain: uncharacterized protein (166 aa).

This is an uncharacterized protein from Homo sapiens (Human).